Reading from the N-terminus, the 44-residue chain is MTSQNPNQPISYPIFTVRWLAVHTLGVPTVFFLGAIAAMQFIQR.

A helical membrane pass occupies residues 19–35; sequence WLAVHTLGVPTVFFLGA. His23 provides a ligand contact to heme.

Belongs to the PsbE/PsbF family. Heterodimer of an alpha subunit and a beta subunit. PSII is composed of 1 copy each of membrane proteins PsbA, PsbB, PsbC, PsbD, PsbE, PsbF, PsbH, PsbI, PsbJ, PsbK, PsbL, PsbM, PsbT, PsbX, PsbY, PsbZ, Psb30/Ycf12, peripheral proteins PsbO, CyanoQ (PsbQ), PsbU, PsbV and a large number of cofactors. It forms dimeric complexes. Heme b serves as cofactor.

The protein localises to the cellular thylakoid membrane. Its function is as follows. This b-type cytochrome is tightly associated with the reaction center of photosystem II (PSII). PSII is a light-driven water:plastoquinone oxidoreductase that uses light energy to abstract electrons from H(2)O, generating O(2) and a proton gradient subsequently used for ATP formation. It consists of a core antenna complex that captures photons, and an electron transfer chain that converts photonic excitation into a charge separation. This Trichodesmium erythraeum (strain IMS101) protein is Cytochrome b559 subunit beta.